Here is a 1263-residue protein sequence, read N- to C-terminus: DNA topoisomerase 2 (1263 aa).

ATP contacts are provided by residues asparagine 80, asparagine 109, 137-139 (STN), and 150-157 (GKNGFGAK). The interaction with DNA stretch occupies residues 329–331 (VKK). 362–364 (QTK) serves as a coordination point for ATP. The Toprim domain occupies 439–553 (CTLILTEGDS…SLVKYEGFIQ (115 aa)). Positions 445, 522, and 524 each coordinate Mg(2+). Residues 737–1223 (VPNLMDGFKP…SPEEIWEEEL (487 aa)) enclose the Topo IIA-type catalytic domain. The active-site O-(5'-phospho-DNA)-tyrosine intermediate is tyrosine 828. The tract at residues 977-1015 (KKASKAVSSAKNTKTTTKAGSKTGSRTRKNPALAKKSQK) is disordered. A compositionally biased stretch (low complexity) spans 981 to 1000 (KAVSSAKNTKTTTKAGSKTG). Positions 1068–1077 (KLVKPLNLTN) are interaction with DNA. The disordered stretch occupies residues 1244–1263 (LLNKKKGSTGKKSRKTSTQK). The span at 1247–1263 (KKKGSTGKKSRKTSTQK) shows a compositional bias: basic residues.

This sequence belongs to the type II topoisomerase family. It depends on Mg(2+) as a cofactor. Mn(2+) is required as a cofactor. Requires Ca(2+) as cofactor.

The catalysed reaction is ATP-dependent breakage, passage and rejoining of double-stranded DNA.. In terms of biological role, can introduce negative superhelical turns into double-stranded circular DNA. The sequence is that of DNA topoisomerase 2 (TOP2) from Acanthamoeba polyphaga (Amoeba).